The sequence spans 646 residues: P-selectin (646 aa).

An N-terminal signal peptide occupies residues 1–41; sequence MASCPKAIWNWRFQRAVFRTVQLLCFSVLIFEVINQKEVSA. Residues 42 to 587 lie on the Extracellular side of the membrane; it reads WTYHYSNKTY…QAGPLTIQET (546 aa). N-linked (GlcNAc...) asparagine glycans are attached at residues N48, N54, and N80. The region spanning 58-158 is the C-type lectin domain; the sequence is AFCQKYYTDL…PCWKRKRALC (101 aa). 17 disulfide bridges follow: C60-C158, C131-C150, C163-C174, C168-C183, C185-C194, C200-C244, C230-C257, C262-C306, C292-C319, C324-C368, C354-C381, C386-C430, C416-C443, C458-C502, C488-C515, C520-C564, and C550-C577. Ca(2+)-binding residues include E121, N123, and N124. An a carbohydrate-binding site is contributed by N123. A carbohydrate is bound by residues E133 and N146. Ca(2+)-binding residues include N146 and D147. The region spanning 159 to 195 is the EGF-like domain; sequence YRASCQDMSCSKQGECIETIGNYTCSCYPGFYGPECE. A glycan (N-linked (GlcNAc...) asparagine) is linked at N180. Sushi domains are found at residues 198-259, 260-321, 322-383, 384-445, 456-517, and 518-579; these read RECG…QCVA, VQCP…VCKA, LQCQ…ECQA, VTCA…TCEE, VQCP…TCRA, and VKCA…TCQA. Residues N212 and N219 are each glycosylated (N-linked (GlcNAc...) asparagine). A glycan (N-linked (GlcNAc...) asparagine) is linked at N336. The N-linked (GlcNAc...) asparagine glycan is linked to N481. Residues N532, N539, and N557 are each glycosylated (N-linked (GlcNAc...) asparagine). A helical transmembrane segment spans residues 588 to 611; it reads LTYVGGAAAGTTGLVTGSILLALL. Topologically, residues 612-646 are cytoplasmic; that stretch reads RRRCRQKDDGKSPLNPQSHLGTYGVFTNAAFDPSP. An Endocytosis signal motif is present at residues 634–637; it reads YGVF. The interaction with SNX17 stretch occupies residues 637 to 646; it reads FTNAAFDPSP.

This sequence belongs to the selectin/LECAM family. As to quaternary structure, interacts with SNX17. Interacts with SELPLG/PSGL1 and PODXL2 and mediates neutrophil adhesion and leukocyte rolling. This interaction requires the sialyl-Lewis X epitope of SELPLG and PODXL2, and specific tyrosine sulfation on SELPLG. Interacts (via C-type lectin domain) with alpha-IIb/beta3 integrin ITGA2B:ITGB3 and alpha-V/beta-3 integrin ITGAV:ITGB3. Interacts with alpha5/beta1 integrin ITGA5:ITGB1 and alpha4/beta1 integrin ITGA4:ITGB. In terms of tissue distribution, stored in the alpha-granules of platelets and Weibel-Palade bodies of endothelial cells. Upon cell activation by agonists, P-selectin is transported rapidly to the cell surface.

The protein localises to the cell membrane. Functionally, ca(2+)-dependent receptor for myeloid cells that binds to carbohydrates on neutrophils and monocytes. Mediates the interaction of activated endothelial cells or platelets with leukocytes. The ligand recognized is sialyl-Lewis X. Mediates rapid rolling of leukocyte rolling over vascular surfaces during the initial steps in inflammation through interaction with SELPLG. Mediates cell-cell interactions and cell adhesion via the interaction with integrin alpha-IIb/beta3 (ITGA2B:ITGB3) and integrin alpha-V/beta-3 (ITGAV:ITGB3). The chain is P-selectin (SELP) from Bos taurus (Bovine).